Reading from the N-terminus, the 421-residue chain is Serine--tRNA ligase (421 aa).

L-serine is bound at residue 231-233 (TAE). 262–264 (RRE) is a binding site for ATP. Glu-285 is an L-serine binding site. An ATP-binding site is contributed by 349–352 (EISS). Ser-384 serves as a coordination point for L-serine.

The protein belongs to the class-II aminoacyl-tRNA synthetase family. Type-1 seryl-tRNA synthetase subfamily. Homodimer. The tRNA molecule binds across the dimer.

Its subcellular location is the cytoplasm. The catalysed reaction is tRNA(Ser) + L-serine + ATP = L-seryl-tRNA(Ser) + AMP + diphosphate + H(+). The enzyme catalyses tRNA(Sec) + L-serine + ATP = L-seryl-tRNA(Sec) + AMP + diphosphate + H(+). It functions in the pathway aminoacyl-tRNA biosynthesis; selenocysteinyl-tRNA(Sec) biosynthesis; L-seryl-tRNA(Sec) from L-serine and tRNA(Sec): step 1/1. Functionally, catalyzes the attachment of serine to tRNA(Ser). Is also able to aminoacylate tRNA(Sec) with serine, to form the misacylated tRNA L-seryl-tRNA(Sec), which will be further converted into selenocysteinyl-tRNA(Sec). The sequence is that of Serine--tRNA ligase from Hydrogenobaculum sp. (strain Y04AAS1).